Here is a 290-residue protein sequence, read N- to C-terminus: MTDTKTLLPLRSVSQLNQYTRCPQAYKLARIDKVWARPAAWLPQGTAFHTVAEVYEKALAEGREMSLERAQEIFREEYAKDIGALCDETPNFEWWFWSGPYNGERDIERRFHLGLEQVEKFIAWRKDKGQQIWTTPGRGICSTEAWKDTNCKECEQPKPAIELPFNIELDGIRVRGFIDAVVVVNGELRVRDYKTGNSPGDDFQLGVYALAVAMTYDVEAPKTGDYFMAGKKGIKAKPTAPYDLTDWTRERITERFHEVEARIQAGDFEPLPEPDKCGFCDVNYSCPVFK.

The sequence is that of Gene 69 protein (69) from Mycobacterium phage L5 (Mycobacteriophage L5).